Consider the following 522-residue polypeptide: DNA damage-binding protein cmr1 (522 aa).

The span at 34-47 (VFTPTLPNRATGSQ) shows a compositional bias: polar residues. 2 disordered regions span residues 34–89 (VFTP…KRKA) and 217–239 (QEKPTSVKQEDEDEEDDDPDPVL). Residues 49-59 (KTKKKPAPKKV) are compositionally biased toward basic residues. The stretch at 182–223 (LTPERVYTMTFHPSETKPLIFAGDKMGHLGILDASQEKPTSV) is one WD 1 repeat. Residues 226–236 (EDEDEEDDDPD) are compositionally biased toward acidic residues. WD repeat units lie at residues 244–284 (PHTR…SVER), 294–331 (VPLSGLDMAADDPNTLYWTTLEGEFGRYDMRTPKQGSV), 336–376 (LSEK…RREP), 381–422 (EHQS…ASWK), 445–488 (GRWV…LAQL), and 491–522 (DGITAVPAVAVFHRSKNWIAGGTASGKICLWM).

This sequence belongs to the WD repeat DDB2/WDR76 family.

Its function is as follows. DNA-binding protein that binds to both single- and double-stranded DNA. Binds preferentially to UV-damaged DNA. May be involved in DNA-metabolic processes. This is DNA damage-binding protein cmr1 from Aspergillus oryzae (strain ATCC 42149 / RIB 40) (Yellow koji mold).